The primary structure comprises 177 residues: MAERAPRGEVAVMVAVQSALVDRPGMLATARGLSHFGEHCIGWLILALLGAIALPRRRREWLVAGAGAFVAHAIAVLIKRLVRRQRPDHPAIAVNVDTPSQLSFPSAHATSTTAAALLMGRATGLPLPVVLVPPMALSRILLGVHYPSDVAVGVALGATVGAIVDSVGGGRQRARKR.

4 helical membrane passes run 35–55 (HFGE…IALP), 62–82 (LVAG…KRLV), 124–144 (GLPL…LLGV), and 150–170 (VAVG…VGGG).

Belongs to the PA-phosphatase related phosphoesterase family.

It is found in the cell membrane. It catalyses the reaction trans,octa-cis-decaprenylphospho-beta-D-ribofuranose 5-phosphate + H2O = trans,octa-cis-decaprenylphospho-beta-D-ribofuranose + phosphate. It functions in the pathway cell wall biogenesis; cell wall polysaccharide biosynthesis. Functionally, phosphatase involved in the biosynthesis of decaprenylphosphoryl arabinose (DPA), which serves as the arabinose donor for the biosynthesis of arabinogalactan, the major mycobacterial cell wall polysaccharide. Catalyzes the dephosphorylation of decaprenylphosphoryl-5-phosphoribose (DPPR) to decaprenyl-phosphoribose (DPR). The protein is Decaprenylphosphoryl-5-phosphoribose phosphatase of Mycobacterium tuberculosis (strain CDC 1551 / Oshkosh).